A 523-amino-acid chain; its full sequence is Frizzled-2 (523 aa).

An FZ domain is found at 1–120; it reads PDHGFCQPIS…HGAEQICVGQ (120 aa). At 1-205 the chain is on the extracellular side; the sequence is PDHGFCQPIS…EDEIRFARVW (205 aa). 5 cysteine pairs are disulfide-bonded: C6–C67, C14–C60, C51–C88, C77–C117, and C81–C105. N20 carries an N-linked (GlcNAc...) asparagine glycan. N121 is a glycosylation site (N-linked (GlcNAc...) asparagine). A helical transmembrane segment spans residues 206–226; the sequence is ILVWSVLCCASTFFTVTTYLV. The Cytoplasmic segment spans residues 227 to 237; that stretch reads DMQRFRYPERP. Residues 238 to 258 form a helical membrane-spanning segment; it reads IIFLSGCYTMVSVAYIAGFVL. Topologically, residues 259–285 are extracellular; that stretch reads EERVVCNERFQEDGYRTVVQGTKKEGC. Residues 286-306 traverse the membrane as a helical segment; it reads TILFMMLYFFSMASSIWWVIL. Over 307–328 the chain is Cytoplasmic; it reads SLTWFLAAGMKWGHEAIEANSQ. Residues 329–349 form a helical membrane-spanning segment; it reads YFHLAAWAVPAVKTITILAMG. At 350–372 the chain is on the extracellular side; it reads QIDGDLLSGVCFVGLNGIDPLRG. The chain crosses the membrane as a helical span at residues 373–393; sequence FVLAPLFVYLFIGTSFLLAGF. The Cytoplasmic portion of the chain corresponds to 394–419; that stretch reads VSLFRIRTIMKHGGTKTEKLERLMVR. Residues 420 to 440 traverse the membrane as a helical segment; sequence IGVFSVLYTVPATIVIACYFY. Topologically, residues 441–477 are extracellular; it reads EQAFRQHWERSWISQHCKSLAIPCPLHFTPRMTPDFT. A helical transmembrane segment spans residues 478–498; the sequence is VYMIKYLMTLIVGITSGFWIF. Over 499–523 the chain is Cytoplasmic; sequence SGKTLHSWRKFYTRLTNSRQGETTV. The short motif at 501 to 506 is the Lys-Thr-X-X-X-Trp motif, mediates interaction with the PDZ domain of Dvl family members element; it reads KTLHSW. The PDZ-binding signature appears at 521-523; that stretch reads TTV.

The protein belongs to the G-protein coupled receptor Fz/Smo family. In terms of tissue distribution, expressed in the developing head and limbs. Expressed broadly in cranial ectoderm. Also expressed in the developing somites (dermomyotome) and in other cranial placodes, including the olfactory, lens, and otic placodes (rostral rim of the vesicle).

The protein resides in the membrane. Its subcellular location is the cell membrane. Receptor for Wnt proteins. Most of frizzled receptors are coupled to the beta-catenin canonical signaling pathway, which leads to the activation of disheveled proteins, inhibition of GSK-3 kinase, nuclear accumulation of beta-catenin and activation of Wnt target genes. A second signaling pathway involving PKC and calcium fluxes has been seen for some family members, but it is not yet clear if it represents a distinct pathway or if it can be integrated in the canonical pathway, as PKC seems to be required for Wnt-mediated inactivation of GSK-3 kinase. Both pathways seem to involve interactions with G-proteins. May be involved in transduction and intercellular transmission of polarity information during tissue morphogenesis and/or in differentiated tissues. The chain is Frizzled-2 (FZD2) from Gallus gallus (Chicken).